Here is a 433-residue protein sequence, read N- to C-terminus: Urokinase-type plasminogen activator (433 aa).

An N-terminal signal peptide occupies residues 1 to 20; it reads MKVWLASLFLCALVVKNSEG. An EGF-like domain is found at 28-64; that stretch reads DESNCGCQNGGVCVSYKYFSRIRRCSCPRKFQGEHCE. 6 disulfides stabilise this stretch: C32–C40, C34–C52, C54–C63, C71–C152, C92–C134, and C123–C147. The tract at residues 35-58 is binds urokinase plasminogen activator surface receptor; it reads QNGGVCVSYKYFSRIRRCSCPRKF. Residues 71–152 form the Kringle domain; it reads CYHGNGDSYR…FVQECMVHDC (82 aa). Residues 153-179 form a connecting peptide region; it reads SLSKKPSSSVDQQGFQCGQKALRPRFK. S159 is subject to Phosphoserine. Cystine bridges form between C169–C301, C211–C227, C219–C290, C315–C384, C347–C363, and C374–C402. Residues 180–426 enclose the Peptidase S1 domain; the sequence is IVGGEFTEVE…FLDWIQSHIG (247 aa). Residues H226 and D277 each act as charge relay system in the active site. S378 acts as the Charge relay system in catalysis.

Belongs to the peptidase S1 family. Found in high and low molecular mass forms. Each consists of two chains, A and B. The high molecular mass form contains a long chain A which is cleaved to yield a short chain A. Forms heterodimer with SERPINA5. Binds LRP1B; binding is followed by internalization and degradation. Interacts with MRC2. Interacts with PLAUR. In complex with SERPINE1, interacts with PLAUR/uPAR. Interacts with SORL1 and LRP1, either alone or in complex with SERPINE1; these interactions are abolished in the presence of LRPAP1/RAP. The ternary complex composed of PLAUR-PLAU-PAI1 also interacts with SORLA. Post-translationally, produced as an inactive single-chain protein (pro-uPA or sc-uPA), is processed into the active disulfide-linked two-chain form of PLAU/uPA by a proteolytic event mediated, at least, by TMPRSS4.

It is found in the secreted. It carries out the reaction Specific cleavage of Arg-|-Val bond in plasminogen to form plasmin.. Inhibited by SERPINA5. Inhibited by SERPINE1. Its function is as follows. Specifically cleaves the zymogen plasminogen to form the active enzyme plasmin. In Mus musculus (Mouse), this protein is Urokinase-type plasminogen activator (Plau).